A 143-amino-acid chain; its full sequence is Large ribosomal subunit protein uL11 (143 aa).

It belongs to the universal ribosomal protein uL11 family. As to quaternary structure, part of the ribosomal stalk of the 50S ribosomal subunit. Interacts with L10 and the large rRNA to form the base of the stalk. L10 forms an elongated spine to which L12 dimers bind in a sequential fashion forming a multimeric L10(L12)X complex. In terms of processing, one or more lysine residues are methylated.

Forms part of the ribosomal stalk which helps the ribosome interact with GTP-bound translation factors. This chain is Large ribosomal subunit protein uL11, found in Albidiferax ferrireducens (strain ATCC BAA-621 / DSM 15236 / T118) (Rhodoferax ferrireducens).